We begin with the raw amino-acid sequence, 558 residues long: Undecaprenyl phosphate-alpha-4-amino-4-deoxy-L-arabinose arabinosyl transferase 1 (558 aa).

The next 12 helical transmembrane spans lie at 4–24 (GAGL…LVPL), 87–107 (FASV…SWTV), 115–135 (LLAA…TYSV), 136–156 (LDPM…FALR), 178–198 (FMTK…PVAL), 207–227 (LGYG…WALA), 257–277 (APFW…LGLL), 295–315 (FLLL…KGKL), 316–336 (LTYI…YGRE), 355–375 (AFAL…LPWA), 383–403 (WPRI…AAVS), and 411–431 (WALA…IIPQ).

This sequence belongs to the glycosyltransferase 83 family.

The protein resides in the cell inner membrane. It carries out the reaction 4-amino-4-deoxy-alpha-L-arabinopyranosyl di-trans,octa-cis-undecaprenyl phosphate + lipid IVA = lipid IIA + di-trans,octa-cis-undecaprenyl phosphate.. It functions in the pathway lipopolysaccharide metabolism; 4-amino-4-deoxy-beta-L-arabinose-lipid A biosynthesis. Functionally, catalyzes the transfer of the L-Ara4N moiety of the glycolipid undecaprenyl phosphate-alpha-L-Ara4N to lipid A. The modified arabinose is attached to lipid A and is required for resistance to polymyxin and cationic antimicrobial peptides. The polypeptide is Undecaprenyl phosphate-alpha-4-amino-4-deoxy-L-arabinose arabinosyl transferase 1 (Sodalis glossinidius (strain morsitans)).